The chain runs to 155 residues: Large ribosomal subunit protein uL22 (155 aa).

Belongs to the universal ribosomal protein uL22 family. As to quaternary structure, part of the 50S ribosomal subunit.

Its function is as follows. This protein binds specifically to 23S rRNA. It makes multiple contacts with different domains of the 23S rRNA in the assembled 50S subunit and ribosome. Functionally, the globular domain of the protein is located near the polypeptide exit tunnel on the outside of the subunit, while an extended beta-hairpin is found that lines the wall of the exit tunnel in the center of the 70S ribosome. The polypeptide is Large ribosomal subunit protein uL22 (Pyrococcus abyssi (strain GE5 / Orsay)).